We begin with the raw amino-acid sequence, 673 residues long: DNA ligase (673 aa).

NAD(+) contacts are provided by residues 33 to 37 (DHQYD), 83 to 84 (SL), and E117. K119 acts as the N6-AMP-lysine intermediate in catalysis. Residues R140, E175, K282, and K306 each coordinate NAD(+). Positions 400, 403, 418, and 424 each coordinate Zn(2+). The 82-residue stretch at 592 to 673 (RGSSAISGKT…WVKMVEDARS (82 aa)) folds into the BRCT domain.

This sequence belongs to the NAD-dependent DNA ligase family. LigA subfamily. Mg(2+) serves as cofactor. Requires Mn(2+) as cofactor.

The catalysed reaction is NAD(+) + (deoxyribonucleotide)n-3'-hydroxyl + 5'-phospho-(deoxyribonucleotide)m = (deoxyribonucleotide)n+m + AMP + beta-nicotinamide D-nucleotide.. Functionally, DNA ligase that catalyzes the formation of phosphodiester linkages between 5'-phosphoryl and 3'-hydroxyl groups in double-stranded DNA using NAD as a coenzyme and as the energy source for the reaction. It is essential for DNA replication and repair of damaged DNA. In Anaplasma marginale (strain St. Maries), this protein is DNA ligase.